The chain runs to 289 residues: SNF1-related protein kinase regulatory subunit beta-2 (289 aa).

Residues 1-10 (MGNVNAREEA) are compositionally biased toward basic and acidic residues. Residues 1–59 (MGNVNAREEANSNNASAVEDEDAEICSREAMSAASDGNHVAPPELMGQSPPHSPRATQS) form a disordered region. G2 carries N-myristoyl glycine lipidation. The kinase-interacting sequence (KIS) stretch occupies residues 103 to 180 (PTMITWCHGG…AGNTFNILDL (78 aa)). An association with SNF1 complex (ASC) region spans residues 217–289 (EPPVVPPHLQ…TVVLYKSLQR (73 aa)).

Belongs to the 5'-AMP-activated protein kinase beta subunit family. In terms of assembly, subunit of a probable heterotrimeric complex consisting of an alpha catalytic (KIN10 or KIN11) subunit, and a beta (KINB) and a gamma (KING or SNF4) non-catalytic regulatory subunits. Interacts with SNF4. Interacts with FLZ1, FLZ2, FLZ8, FLZ9, FLZ10, FLZ12, FLZ13 and FLZ14. Post-translationally, sumoylated. As to expression, expressed in leaves, stems, roots, flower buds and flowers. Not detectable in siliques.

The protein resides in the cell membrane. Regulatory subunit of the probable trimeric SNF1-related protein kinase (SnRK) complex, which may play a role in a signal transduction cascade regulating gene expression and carbohydrate metabolism in higher plants. The SnRK complex may also be involved in the regulation of fatty acid synthesis by phosphorylation of acetyl-CoA carboxylase and in assimilation of nitrogen by phosphorylating nitrate reductase. The protein is SNF1-related protein kinase regulatory subunit beta-2 (KINB2) of Arabidopsis thaliana (Mouse-ear cress).